The primary structure comprises 254 residues: Sulfoacetaldehyde reductase (254 aa).

Position 8–32 (8–32) interacts with NADP(+); it reads FITGATSGFGEAAAQVFADAGWSLV. S141 is a substrate binding site. Y154 functions as the Proton acceptor in the catalytic mechanism.

This sequence belongs to the short-chain dehydrogenases/reductases (SDR) family. In terms of assembly, homodimer and heterotetramer.

It carries out the reaction 2-hydroxyethane-1-sulfonate + NADP(+) = sulfoacetaldehyde + NADPH + H(+). It participates in organosulfur degradation. Catalyzes the formation of isethionate from 2-sulfoacetaldehyde in the deaminative pathway of taurine. The enzyme is specific for NADPH; NADH is not a substrate. This is Sulfoacetaldehyde reductase (isfD) from Klebsiella oxytoca.